The following is a 254-amino-acid chain: 5-oxoprolinase subunit A (254 aa).

The protein belongs to the LamB/PxpA family. As to quaternary structure, forms a complex composed of PxpA, PxpB and PxpC.

The catalysed reaction is 5-oxo-L-proline + ATP + 2 H2O = L-glutamate + ADP + phosphate + H(+). Its function is as follows. Catalyzes the cleavage of 5-oxoproline to form L-glutamate coupled to the hydrolysis of ATP to ADP and inorganic phosphate. This chain is 5-oxoprolinase subunit A, found in Burkholderia ambifaria (strain MC40-6).